A 409-amino-acid chain; its full sequence is Peptidase T (409 aa).

H78 is a Zn(2+) binding site. The active site involves D80. D140 provides a ligand contact to Zn(2+). Residue E173 is the Proton acceptor of the active site. Zn(2+) contacts are provided by E174, D196, and H379.

The protein belongs to the peptidase M20B family. Requires Zn(2+) as cofactor.

It localises to the cytoplasm. It carries out the reaction Release of the N-terminal residue from a tripeptide.. Its function is as follows. Cleaves the N-terminal amino acid of tripeptides. This Salmonella choleraesuis (strain SC-B67) protein is Peptidase T.